Consider the following 286-residue polypeptide: MAGAKEIKTKIASVKNTQKITSAMEMVAASKMRRAQERMAASRPYAESMRKVIGHVAQGSLEYKHPYLEVREAKRVGYIVVATDRGLCGGLNVNLFKKVVADVKSWKEQGAEFEFCPIGARSVQFFKSFGGQVSAQASGLGDAPKLNDLIGTVQVMLEAYNEGKLDRLYVVFNKFVNTMTQTPVIEQLLPLPKSEDDEVAHRWDYIYEPDPKALLDTLLVRYVESQVYQGVVENIASEQAARMVAMKAATDNAGTLIDDLQLVYNKARQAAITQELSEIVSGASAV.

It belongs to the ATPase gamma chain family. In terms of assembly, F-type ATPases have 2 components, CF(1) - the catalytic core - and CF(0) - the membrane proton channel. CF(1) has five subunits: alpha(3), beta(3), gamma(1), delta(1), epsilon(1). CF(0) has three main subunits: a, b and c.

It localises to the cell inner membrane. In terms of biological role, produces ATP from ADP in the presence of a proton gradient across the membrane. The gamma chain is believed to be important in regulating ATPase activity and the flow of protons through the CF(0) complex. The protein is ATP synthase gamma chain of Shewanella oneidensis (strain ATCC 700550 / JCM 31522 / CIP 106686 / LMG 19005 / NCIMB 14063 / MR-1).